Here is a 157-residue protein sequence, read N- to C-terminus: uncharacterized protein (157 aa).

This is an uncharacterized protein from Rickettsia prowazekii (strain Madrid E).